The sequence spans 493 residues: 3-octaprenyl-4-hydroxybenzoate carboxy-lyase (493 aa).

Mn(2+) is bound at residue Asn172. Prenylated FMN-binding positions include 175-177 (IYR), 189-191 (RWL), and 194-195 (RG). Glu238 is a binding site for Mn(2+). The active-site Proton donor is the Asp287.

Belongs to the UbiD family. In terms of assembly, homohexamer. It depends on prenylated FMN as a cofactor. Mn(2+) is required as a cofactor.

Its subcellular location is the cell membrane. The enzyme catalyses a 4-hydroxy-3-(all-trans-polyprenyl)benzoate + H(+) = a 2-(all-trans-polyprenyl)phenol + CO2. It participates in cofactor biosynthesis; ubiquinone biosynthesis. Its function is as follows. Catalyzes the decarboxylation of 3-octaprenyl-4-hydroxy benzoate to 2-octaprenylphenol, an intermediate step in ubiquinone biosynthesis. The polypeptide is 3-octaprenyl-4-hydroxybenzoate carboxy-lyase (Shewanella frigidimarina (strain NCIMB 400)).